The sequence spans 210 residues: Probable GTP-binding protein EngB (210 aa).

The 175-residue stretch at 30–204 (QGYEVAFAGR…YRVLADWMEL (175 aa)) folds into the EngB-type G domain. Residues 38 to 45 (GRSNAGKS), 64 to 68 (GRTQL), 82 to 85 (DLPG), 149 to 152 (TKAD), and 182 to 185 (LFSA) contribute to the GTP site. Residues Ser45 and Thr66 each coordinate Mg(2+).

It belongs to the TRAFAC class TrmE-Era-EngA-EngB-Septin-like GTPase superfamily. EngB GTPase family. Requires Mg(2+) as cofactor.

Functionally, necessary for normal cell division and for the maintenance of normal septation. In Pseudomonas entomophila (strain L48), this protein is Probable GTP-binding protein EngB.